A 135-amino-acid polypeptide reads, in one-letter code: Ribonuclease P protein component (135 aa).

This sequence belongs to the RnpA family. As to quaternary structure, consists of a catalytic RNA component (M1 or rnpB) and a protein subunit.

It catalyses the reaction Endonucleolytic cleavage of RNA, removing 5'-extranucleotides from tRNA precursor.. Its function is as follows. RNaseP catalyzes the removal of the 5'-leader sequence from pre-tRNA to produce the mature 5'-terminus. It can also cleave other RNA substrates such as 4.5S RNA. The protein component plays an auxiliary but essential role in vivo by binding to the 5'-leader sequence and broadening the substrate specificity of the ribozyme. The sequence is that of Ribonuclease P protein component from Xylella fastidiosa (strain Temecula1 / ATCC 700964).